The chain runs to 426 residues: Probable inactive metalloprotease YmfF (426 aa).

Positions 50 and 138 each coordinate Zn(2+).

Belongs to the peptidase M16 family.

The chain is Probable inactive metalloprotease YmfF (ymfF) from Bacillus subtilis (strain 168).